Consider the following 141-residue polypeptide: Small ribosomal subunit protein bS18c (141 aa).

2 disordered regions span residues 14 to 55 (EFIA…IKPG) and 120 to 141 (IKRR…RPKK). A compositionally biased stretch (pro residues) spans 24-34 (PKAPLQPPLPP). Basic residues predominate over residues 35–51 (SKRKGKPPKSPRRRSSR).

This sequence belongs to the bacterial ribosomal protein bS18 family. As to quaternary structure, part of the 30S ribosomal subunit.

Its subcellular location is the plastid. The protein localises to the chloroplast. This chain is Small ribosomal subunit protein bS18c, found in Pelargonium hortorum (Common geranium).